A 116-amino-acid chain; its full sequence is NADH-ubiquinone oxidoreductase chain 3 (116 aa).

Helical transmembrane passes span 10–30 (FLTL…TFAA), 64–84 (FFLV…LFPL), and 88–108 (VFFH…FEWV).

Belongs to the complex I subunit 3 family.

The protein localises to the mitochondrion membrane. The enzyme catalyses a ubiquinone + NADH + 5 H(+)(in) = a ubiquinol + NAD(+) + 4 H(+)(out). Core subunit of the mitochondrial membrane respiratory chain NADH dehydrogenase (Complex I) that is believed to belong to the minimal assembly required for catalysis. Complex I functions in the transfer of electrons from NADH to the respiratory chain. The immediate electron acceptor for the enzyme is believed to be ubiquinone. The polypeptide is NADH-ubiquinone oxidoreductase chain 3 (ND3) (Patiria pectinifera (Starfish)).